The chain runs to 354 residues: Sulfate/thiosulfate import ATP-binding protein CysA (354 aa).

Residues 3–237 (IEVRGLSKRF…PATPFVYGFL (235 aa)) enclose the ABC transporter domain. 35-42 (GPSGCGKT) is a binding site for ATP.

The protein belongs to the ABC transporter superfamily. Sulfate/tungstate importer (TC 3.A.1.6) family. As to quaternary structure, the complex is composed of two ATP-binding proteins (CysA), two transmembrane proteins (CysT and CysW) and a solute-binding protein (CysP).

It is found in the cell inner membrane. It catalyses the reaction sulfate(out) + ATP + H2O = sulfate(in) + ADP + phosphate + H(+). It carries out the reaction thiosulfate(out) + ATP + H2O = thiosulfate(in) + ADP + phosphate + H(+). Its function is as follows. Part of the ABC transporter complex CysAWTP involved in sulfate/thiosulfate import. Responsible for energy coupling to the transport system. In Bordetella bronchiseptica (strain ATCC BAA-588 / NCTC 13252 / RB50) (Alcaligenes bronchisepticus), this protein is Sulfate/thiosulfate import ATP-binding protein CysA.